A 417-amino-acid polypeptide reads, in one-letter code: NADH-quinone oxidoreductase subunit D (417 aa).

It belongs to the complex I 49 kDa subunit family. In terms of assembly, NDH-1 is composed of 14 different subunits. Subunits NuoB, C, D, E, F, and G constitute the peripheral sector of the complex.

The protein localises to the cell inner membrane. It carries out the reaction a quinone + NADH + 5 H(+)(in) = a quinol + NAD(+) + 4 H(+)(out). Its function is as follows. NDH-1 shuttles electrons from NADH, via FMN and iron-sulfur (Fe-S) centers, to quinones in the respiratory chain. The immediate electron acceptor for the enzyme in this species is believed to be ubiquinone. Couples the redox reaction to proton translocation (for every two electrons transferred, four hydrogen ions are translocated across the cytoplasmic membrane), and thus conserves the redox energy in a proton gradient. The sequence is that of NADH-quinone oxidoreductase subunit D from Francisella tularensis subsp. mediasiatica (strain FSC147).